Consider the following 556-residue polypeptide: Valencene synthase (556 aa).

The segment covering 1–12 has biased composition (polar residues); it reads MSTQVSASSLAQ. Residues 1-24 are disordered; that stretch reads MSTQVSASSLAQIPQPKNRPVANF. Aspartate 310, aspartate 314, and glutamate 462 together coordinate Mg(2+). A DDXXD motif motif is present at residues 310–314; that stretch reads DDIHD.

It belongs to the terpene synthase family. Tpsa subfamily. Mg(2+) serves as cofactor. As to expression, expressed in flowers and anthers. Detected inside the pollen grains, but not in stems, leaves, tendrils, roots, seeds, pistils or caps.

The protein resides in the cytoplasm. The enzyme catalyses (2E,6E)-farnesyl diphosphate = (+)-valencene + diphosphate. It carries out the reaction (2E,6E)-farnesyl diphosphate = (-)-7-epi-alpha-selinene + diphosphate. Its pathway is secondary metabolite biosynthesis; terpenoid biosynthesis. Involved in the biosynthesis of valencene, a major volatile emitted from flowers of grapevine. Can use farnesyl diphosphate as substrate, but not geranyl diphosphate or geranylgeranyl diphosphate. Produces mainly (+)-valencene and (-)-7-epi-alpha-selinene along with five minor products. This chain is Valencene synthase (ValCS), found in Vitis vinifera (Grape).